The following is a 255-amino-acid chain: MAVEIEQFMCRSDNFGVLVHDPKSGQTAIIDAPEEAPILAAIKRTGWTPTMILTTHHHMDHVEANLALKERFKLRIVGPEAEKAKIPGIDETVEEGSVLHLGDERIEVIATPGHTAGHVSYHLPASKVAFTADTLFALGCGRLFECKPPVMYESLRKLAALPAATTIYCGHEYTLANARFALTVDPTNSALKERATRIEALRVDNKPTLPTTIGEELSTNPFLRWHDPAIRKHLGMEKAGDAEVFAEIRKRKDNF.

Residues His56, His58, Asp60, His61, His114, Asp133, and His171 each coordinate Zn(2+).

It belongs to the metallo-beta-lactamase superfamily. Glyoxalase II family. In terms of assembly, monomer. Zn(2+) is required as a cofactor.

The catalysed reaction is an S-(2-hydroxyacyl)glutathione + H2O = a 2-hydroxy carboxylate + glutathione + H(+). The protein operates within secondary metabolite metabolism; methylglyoxal degradation; (R)-lactate from methylglyoxal: step 2/2. Functionally, thiolesterase that catalyzes the hydrolysis of S-D-lactoyl-glutathione to form glutathione and D-lactic acid. The protein is Hydroxyacylglutathione hydrolase of Mesorhizobium japonicum (strain LMG 29417 / CECT 9101 / MAFF 303099) (Mesorhizobium loti (strain MAFF 303099)).